The sequence spans 183 residues: Putative lipoprotein LpqE (183 aa).

The first 30 residues, 1-30 (MSRFKISLPALATRVAVLGFLTLMASVLGG), serve as a signal peptide directing secretion. Cys31 is lipidated: N-palmitoyl cysteine. A lipid anchor (S-diacylglycerol cysteine) is attached at Cys31.

Its subcellular location is the cell membrane. This is Putative lipoprotein LpqE (lpqE) from Mycobacterium leprae (strain TN).